Reading from the N-terminus, the 528-residue chain is uncharacterized protein (528 aa).

Composition is skewed to basic residues over residues 1–16 (MGKASKATKKFTKNHL) and 25–43 (QLARSKKVYGTKNRNSHTK). Positions 1–59 (MGKASKATKKFTKNHLKNTIERRKQLARSKKVYGTKNRNSHTKNKLESGTNDNNKNKED) are disordered.

The protein belongs to the NOC2 family.

It is found in the nucleus. It localises to the nucleolus. This is an uncharacterized protein from Schizosaccharomyces pombe (strain 972 / ATCC 24843) (Fission yeast).